The following is a 552-amino-acid chain: MILERVEIVGFRGINRLSLMLEQNNVLIGENAWGKSSLLDALTLLLSPESDLYHFERDDFWFPPGDINGREHHLHIILTFRESLPGRHRVRRYRPLEACWTPCTDGYHRIFYRLEGESAEDGSVMTLRSFLDKDGHPIDVEDINDQARHLVRLMPVLRLRDARFMRRIRNGTVPNVPNVEVTARQLDFLARELSSHPQNLSDGQIRQGLSAMVQLLEHYFSEQGAGQARYRLMRRRASNEQRSWRYLDIINRMIDRPGGRSYRVILLGLFATLLQAKGTLRLDKDARPLLLIEDPETRLHPIMLSVAWHLLNLLPLQRIATTNSGELLSLTPVEHVCRLVRESSRVAAWRLGPSGLSTEDSRRISFHIRFNRPSSLFARCWLLVEGETETWVINELARQCGHHFDAEGIKVIEFAQSGLKPLVKFARRMGIEWHVLVDGDEAGKKYAATVRSLLNNDREAEREHLTALPALDMEHFMYRQGFSDVFHRMAQIPENVPMNLRKIISKAIHRSSKPDLAIEVAMEAGRRGVDSVPTLLKKMFSRVLWLARGRAD.

29-36 is a binding site for ATP; sequence GENAWGKS. A Toprim domain is found at 379–469; sequence RCWLLVEGET…AEREHLTALP (91 aa).

This is an uncharacterized protein from Escherichia coli (strain K12).